A 234-amino-acid chain; its full sequence is Phosphoribosylaminoimidazole-succinocarboxamide synthase (234 aa).

This sequence belongs to the SAICAR synthetase family.

The catalysed reaction is 5-amino-1-(5-phospho-D-ribosyl)imidazole-4-carboxylate + L-aspartate + ATP = (2S)-2-[5-amino-1-(5-phospho-beta-D-ribosyl)imidazole-4-carboxamido]succinate + ADP + phosphate + 2 H(+). Its pathway is purine metabolism; IMP biosynthesis via de novo pathway; 5-amino-1-(5-phospho-D-ribosyl)imidazole-4-carboxamide from 5-amino-1-(5-phospho-D-ribosyl)imidazole-4-carboxylate: step 1/2. In Pyrobaculum aerophilum (strain ATCC 51768 / DSM 7523 / JCM 9630 / CIP 104966 / NBRC 100827 / IM2), this protein is Phosphoribosylaminoimidazole-succinocarboxamide synthase.